A 263-amino-acid polypeptide reads, in one-letter code: Small ribosomal subunit protein uS2 (263 aa).

The segment at 228–263 (QLEEPEADLADEDDNGMTTSDDGDAEALDIPDDSDA) is disordered. Residues 230 to 263 (EEPEADLADEDDNGMTTSDDGDAEALDIPDDSDA) are compositionally biased toward acidic residues.

The protein belongs to the universal ribosomal protein uS2 family.

The protein is Small ribosomal subunit protein uS2 of Thermosynechococcus vestitus (strain NIES-2133 / IAM M-273 / BP-1).